Reading from the N-terminus, the 204-residue chain is Potassium-transporting ATPase KdpC subunit (204 aa).

Residues alanine 21 to valine 41 traverse the membrane as a helical segment.

It belongs to the KdpC family. As to quaternary structure, the system is composed of three essential subunits: KdpA, KdpB and KdpC.

It localises to the cell inner membrane. Functionally, part of the high-affinity ATP-driven potassium transport (or Kdp) system, which catalyzes the hydrolysis of ATP coupled with the electrogenic transport of potassium into the cytoplasm. This subunit acts as a catalytic chaperone that increases the ATP-binding affinity of the ATP-hydrolyzing subunit KdpB by the formation of a transient KdpB/KdpC/ATP ternary complex. This is Potassium-transporting ATPase KdpC subunit from Ralstonia nicotianae (strain ATCC BAA-1114 / GMI1000) (Ralstonia solanacearum).